The sequence spans 899 residues: Proline-rich transmembrane protein 4 (899 aa).

Positions 1 to 23 (MARHGCLGLGLFCCVLFAATVGP) are cleaved as a signal peptide. Disordered stretches follow at residues 110–152 (LTEW…RRST) and 295–340 (TVPI…PEAP). The next 5 membrane-spanning stretches (helical) occupy residues 370 to 390 (VGALFGLVALLALLALALLPW), 392 to 412 (CPPGAPCLALLDLLLLSAGTT), 430 to 450 (ALAWLLLQDLPLPCLAAGLGL), 467 to 487 (LAALLLLGLGLAAAAALGSAA), and 500 to 520 (GLHAFLAAFLSGLLLALSCWG). The residue at position 641 (Ser641) is a Phosphoserine. Disordered regions lie at residues 769–797 (TGGRASERSGEASGPAAPPELPSPGAWPA) and 839–869 (PSGSSPSLPASGSYQALSPPSRDSPEPASEL). Residues 840-851 (SGSSPSLPASGS) are compositionally biased toward low complexity.

It is found in the membrane. This is Proline-rich transmembrane protein 4 (PRRT4) from Homo sapiens (Human).